Here is a 416-residue protein sequence, read N- to C-terminus: NADH-quinone oxidoreductase subunit H (416 aa).

Transmembrane regions (helical) follow at residues 16–36, 84–104, 124–144, 165–185, 197–217, 260–280, 288–308, 320–340, and 353–373; these read LILAKAVGVFVFLVLTVLAAI, PVYLLAPVISVIPAFLAFAVI, LAVAVLYILAVTSVGVYGIVL, VVSYEIAMALSFATVFLYAGT, STWYVFLLLPSFLVYVTSMVG, VSALATTMFLGGWHAPWPISL, WWPLLWFTAKVWVFLFVYIWL, FMAIGWKMLIPVSLAWIMIVA, and WASGLLIAGTVLTFGLAVILW.

This sequence belongs to the complex I subunit 1 family. NDH-1 is composed of 14 different subunits. Subunits NuoA, H, J, K, L, M, N constitute the membrane sector of the complex.

The protein localises to the cell membrane. The enzyme catalyses a quinone + NADH + 5 H(+)(in) = a quinol + NAD(+) + 4 H(+)(out). In terms of biological role, NDH-1 shuttles electrons from NADH, via FMN and iron-sulfur (Fe-S) centers, to quinones in the respiratory chain. The immediate electron acceptor for the enzyme in this species is believed to be menaquinone. Couples the redox reaction to proton translocation (for every two electrons transferred, four hydrogen ions are translocated across the cytoplasmic membrane), and thus conserves the redox energy in a proton gradient. This subunit may bind ubiquinone. This is NADH-quinone oxidoreductase subunit H from Mycobacterium sp. (strain KMS).